Consider the following 376-residue polypeptide: Nuclear egress protein 1 (376 aa).

Ser-19 carries the phosphoserine modification. A disordered region spans residues 22–57; the sequence is RKRRQRELASKVASTVNGATSANNHGEPPSPADARP. The span at 33 to 45 shows a compositional bias: polar residues; it reads VASTVNGATSANN. The CCCH-type zinc-finger motif lies at 106 to 211; sequence CLDISPYGNE…HVIFENSDVH (106 aa). Residues 316–376 are disordered; the sequence is VVSTNGCGPS…PLFLNSIRAP (61 aa). Positions 317–332 are enriched in polar residues; that stretch reads VSTNGCGPSSSSQSTP.

The protein belongs to the herpesviridae NEC1 protein family. Forms a heterohexameric complex with NEC2. Interacts with capsid vertex specific component 2/CVC2; this interaction directs the capsid to the host inner nuclear membrane to initiate budding. Phosphorylated at serine residues in the N-terminus. This phosphorylation regulates the localization within the inner nuclear membrane. Phosphorylation by viral kinase UL97 at Ser-19 plays an important role for correct viral nuclear egress complex (NEC) localization.

The protein localises to the host nucleus inner membrane. In terms of biological role, plays an essential role in virion nuclear egress, the first step of virion release from infected cell. Within the host nucleus, NEC1 interacts with the newly formed capsid through the vertexes and directs it to the inner nuclear membrane by associating with NEC2. Induces the budding of the capsid at the inner nuclear membrane as well as its envelopment into the perinuclear space. There, the NEC1/NEC2 complex promotes the fusion of the enveloped capsid with the outer nuclear membrane and the subsequent release of the viral capsid into the cytoplasm where it will reach the secondary budding sites in the host Golgi or trans-Golgi network. This Homo sapiens (Human) protein is Nuclear egress protein 1.